We begin with the raw amino-acid sequence, 432 residues long: Asparagine--tRNA ligase (432 aa).

Belongs to the class-II aminoacyl-tRNA synthetase family. In terms of assembly, homodimer.

It is found in the cytoplasm. It carries out the reaction tRNA(Asn) + L-asparagine + ATP = L-asparaginyl-tRNA(Asn) + AMP + diphosphate + H(+). This chain is Asparagine--tRNA ligase, found in Lactobacillus gasseri (strain ATCC 33323 / DSM 20243 / BCRC 14619 / CIP 102991 / JCM 1131 / KCTC 3163 / NCIMB 11718 / NCTC 13722 / AM63).